We begin with the raw amino-acid sequence, 424 residues long: Tyrosine--tRNA ligase (424 aa).

Tyrosine 37 contacts L-tyrosine. Positions 42 to 51 (PTADSLHLGH) match the 'HIGH' region motif. Lysine 144 carries the N6-acetyllysine modification. Residues tyrosine 175 and glutamine 179 each contribute to the L-tyrosine site. The 'KMSKS' region signature appears at 235-239 (KFGKT). Residue lysine 238 coordinates ATP. Positions 357–414 (ADLMQALVDSELQPSRGQARKTIASNAITINGEKQSDPEYFFKEEDRLFGRFTLLRRG) constitute an S4 RNA-binding domain.

This sequence belongs to the class-I aminoacyl-tRNA synthetase family. TyrS type 1 subfamily. In terms of assembly, homodimer.

It localises to the cytoplasm. The catalysed reaction is tRNA(Tyr) + L-tyrosine + ATP = L-tyrosyl-tRNA(Tyr) + AMP + diphosphate + H(+). Catalyzes the attachment of tyrosine to tRNA(Tyr) in a two-step reaction: tyrosine is first activated by ATP to form Tyr-AMP and then transferred to the acceptor end of tRNA(Tyr). The protein is Tyrosine--tRNA ligase of Shigella boydii serotype 4 (strain Sb227).